Here is an 875-residue protein sequence, read N- to C-terminus: Phosphoenolpyruvate carboxylase (875 aa).

Residues H137 and K542 contribute to the active site.

It belongs to the PEPCase type 1 family. The cofactor is Mg(2+).

The enzyme catalyses oxaloacetate + phosphate = phosphoenolpyruvate + hydrogencarbonate. Functionally, forms oxaloacetate, a four-carbon dicarboxylic acid source for the tricarboxylic acid cycle. This Pseudomonas entomophila (strain L48) protein is Phosphoenolpyruvate carboxylase.